We begin with the raw amino-acid sequence, 1596 residues long: Cellulose synthase 2 (1596 aa).

The interval 1-749 (MIYRAILKRL…RSARHGATAS (749 aa)) is catalytic. A run of 2 helical transmembrane segments spans residues 25 to 45 (SPFV…GVTI) and 106 to 126 (LSLL…LSYF). Positions 145–238 (DWPVVDVYVP…YVVIFDCDHI (94 aa)) are catalytic subdomain A. Residue Asp187 is part of the active site. The substrate site is built by Asp234 and Asp236. The catalytic subdomain B stretch occupies residues 315-375 (SAVLGIGGFA…GQRVRWARGM (61 aa)). Asp331 is a catalytic residue. 4 helical membrane-spanning segments follow: residues 396–416 (LCYL…VFLA), 421–441 (FLFL…VYAF), 505–525 (FDLN…LALV), and 544–564 (FALN…SIAV). Residues 570–669 (QIRHKPRVRA…ERQIVEFMFG (100 aa)) enclose the PilZ domain. Positions 750–1596 (LIVLLGLPAA…RVKDTTDASH (847 aa)) are cyclic di-GMP binding domain. Disordered stretches follow at residues 769 to 812 (SRAT…IAPA) and 828 to 868 (TGPA…APPI). A compositionally biased stretch (pro residues) spans 783–809 (VEPPPVNAPPPPSLPQPPGTLPTPPQI). Residues 1553–1573 (LTLYVLGLVGAGLVAAAAVRL) form a helical membrane-spanning segment.

It in the N-terminal section; belongs to the glycosyltransferase 2 family. The protein in the C-terminal section; belongs to the AcsB/BcsB family.

It is found in the cell inner membrane. It catalyses the reaction [(1-&gt;4)-beta-D-glucosyl](n) + UDP-alpha-D-glucose = [(1-&gt;4)-beta-D-glucosyl](n+1) + UDP + H(+). This is Cellulose synthase 2 (acsAII) from Novacetimonas hansenii (Komagataeibacter hansenii).